We begin with the raw amino-acid sequence, 437 residues long: Adenylosuccinate synthetase (437 aa).

GTP is bound by residues 13 to 19 (GDEGKGK) and 41 to 43 (GHT). Asp-14 serves as the catalytic Proton acceptor. 2 residues coordinate Mg(2+): Asp-14 and Gly-41. IMP contacts are provided by residues 14–17 (DEGK), 39–42 (NAGH), Thr-130, Arg-144, Gln-225, Thr-240, and Arg-310. His-42 functions as the Proton donor in the catalytic mechanism. 306 to 312 (ATTGRLR) is a binding site for substrate. Residues Arg-312, 338 to 340 (KLD), and 421 to 423 (STG) each bind GTP.

This sequence belongs to the adenylosuccinate synthetase family. In terms of assembly, homodimer. Mg(2+) is required as a cofactor.

It localises to the cytoplasm. It carries out the reaction IMP + L-aspartate + GTP = N(6)-(1,2-dicarboxyethyl)-AMP + GDP + phosphate + 2 H(+). Its pathway is purine metabolism; AMP biosynthesis via de novo pathway; AMP from IMP: step 1/2. Plays an important role in the de novo pathway of purine nucleotide biosynthesis. Catalyzes the first committed step in the biosynthesis of AMP from IMP. The protein is Adenylosuccinate synthetase of Psychromonas ingrahamii (strain DSM 17664 / CCUG 51855 / 37).